The sequence spans 480 residues: Ribulose bisphosphate carboxylase large chain (480 aa).

Positions Met-1–Ser-2 are excised as a propeptide. Pro-3 is subject to N-acetylproline. Residue Lys-14 is modified to N6,N6,N6-trimethyllysine. Substrate-binding residues include Asn-123 and Thr-173. Lys-175 serves as the catalytic Proton acceptor. Lys-177 serves as a coordination point for substrate. Residues Lys-201, Asp-203, and Glu-204 each contribute to the Mg(2+) site. Lys-201 is modified (N6-carboxylysine). The Proton acceptor role is filled by His-294. Positions 295, 327, and 379 each coordinate substrate.

This sequence belongs to the RuBisCO large chain family. Type I subfamily. In terms of assembly, heterohexadecamer of 8 large chains and 8 small chains; disulfide-linked. The disulfide link is formed within the large subunit homodimers. Mg(2+) serves as cofactor. Post-translationally, the disulfide bond which can form in the large chain dimeric partners within the hexadecamer appears to be associated with oxidative stress and protein turnover.

The protein resides in the plastid. It is found in the chloroplast. The catalysed reaction is 2 (2R)-3-phosphoglycerate + 2 H(+) = D-ribulose 1,5-bisphosphate + CO2 + H2O. It carries out the reaction D-ribulose 1,5-bisphosphate + O2 = 2-phosphoglycolate + (2R)-3-phosphoglycerate + 2 H(+). Its function is as follows. RuBisCO catalyzes two reactions: the carboxylation of D-ribulose 1,5-bisphosphate, the primary event in carbon dioxide fixation, as well as the oxidative fragmentation of the pentose substrate in the photorespiration process. Both reactions occur simultaneously and in competition at the same active site. This is Ribulose bisphosphate carboxylase large chain from Alluaudia procera (Madagascan ocotillo).